Here is a 777-residue protein sequence, read N- to C-terminus: MNSLLRLSHLAGPAHYRALHSSSSIWSKVAISKFEPKSYLPYEKLSQTVKIVKDRLKRPLTLSEKILYGHLDQPKTQDIERGVSYLRLRPDRVAMQDATAQMAMLQFISSGLPKTAVPSTIHCDHLIEAQKGGAQDLARAKDLNKEVFNFLATAGSKYGVGFWKPGSGIIHQIILENYAFPGLLLIGTDSHTPNGGGLGGLCIGVGGADAVDVMADIPWELKCPKVIGIKLTGKLNGWTSAKDVILKVADILTVKGGTGAIVEYFGPGVDSISATGMGTICNMGAEIGATTSVFPYNESMYKYLEATGRKEIAEEARKYKDLLTADDGANYDQIIEINLDTLTPHVNGPFTPDLASSIDKLGENAKKNGWPLDVKVSLIGSCTNSSYEDMTRAASIAKQALDKGLKAKTIFTITPGSEQVRATIERDGLSKIFADFGGMVLANACGPCIGQWDRQDVKKGEKNTIVTSYNRNFTGRNDANPATHGFVTSPDITTAMAISGRLDFNPLTDELTAADGSKFKLQAPTGLDLPPKGYDPGEDTFQAPSGSGQVDVSPSSDRLQLLSPFDKWDGKDLEDMKILIKVTGKCTTDHISAAGPWLKYRGHLDNISNNLFLTAINADNGEMNKVKNQVTGEYGAVPATARKYKADGVRWVAIGDENYGEGSSREHAALEPRHLGGRAIIVKSFARIHETNLKKQGMLPLTFANPADYDKIDPSDNVSIVGLSSFAPGKPLTAIFKKTNGSKVEVTLNHTFNEQQIEWFKAGSALNRMKEVFAKSK.

A mitochondrion-targeting transit peptide spans 1 to 26 (MNSLLRLSHLAGPAHYRALHSSSSIW). Substrate is bound by residues Gln-96 and 189–191 (DSH). Positions 382, 445, and 448 each coordinate [4Fe-4S] cluster. The substrate site is built by Arg-471 and Arg-476. The tract at residues 534-555 (YDPGEDTFQAPSGSGQVDVSPS) is disordered. Residues 542–555 (QAPSGSGQVDVSPS) are compositionally biased toward polar residues. Residues Arg-601 and 664–665 (SR) each bind substrate.

Belongs to the aconitase/IPM isomerase family. In terms of assembly, monomer. Requires [4Fe-4S] cluster as cofactor.

It is found in the mitochondrion. The enzyme catalyses citrate = D-threo-isocitrate. The protein operates within carbohydrate metabolism; tricarboxylic acid cycle; isocitrate from oxaloacetate: step 2/2. Its function is as follows. Catalyzes the isomerization of citrate to isocitrate via cis-aconitate. In Caenorhabditis elegans, this protein is Probable aconitate hydratase, mitochondrial.